The sequence spans 306 residues: 4-diphosphocytidyl-2-C-methyl-D-erythritol kinase (306 aa).

Residue K23 is part of the active site. P108–A118 contacts ATP. D150 is an active-site residue.

The protein belongs to the GHMP kinase family. IspE subfamily.

It catalyses the reaction 4-CDP-2-C-methyl-D-erythritol + ATP = 4-CDP-2-C-methyl-D-erythritol 2-phosphate + ADP + H(+). It participates in isoprenoid biosynthesis; isopentenyl diphosphate biosynthesis via DXP pathway; isopentenyl diphosphate from 1-deoxy-D-xylulose 5-phosphate: step 3/6. Its function is as follows. Catalyzes the phosphorylation of the position 2 hydroxy group of 4-diphosphocytidyl-2C-methyl-D-erythritol. The chain is 4-diphosphocytidyl-2-C-methyl-D-erythritol kinase from Rhodopseudomonas palustris (strain BisB18).